The primary structure comprises 286 residues: MVDLPKFTMRDLVECGVHFGHKTSRWNPKMAPYIYGVHNDIHIINLQSTVFLLKNALSALYDIVLKRGRVLFIGTKVQASAIIADEATRCGQYYINNRWLGGMLTNWETISLSIKKLREYEKLLQNVDNQFTKKELLLFEKKRAKLDRSIGGICNMGGLPHVIFVIDTNKERIAIREANKLNIPVIAVLDTNSDPTGIDYPIPGNDDAVRSIDFFCKIISDTILEAIRSDLAKSGINVDGIKDFSVERREDFLKMNKDNKSNKSNTINADENIKESDLIGGSNNEG.

The disordered stretch occupies residues 257–286; it reads KDNKSNKSNTINADENIKESDLIGGSNNEG.

Belongs to the universal ribosomal protein uS2 family.

The polypeptide is Small ribosomal subunit protein uS2 (Ehrlichia ruminantium (strain Gardel)).